The chain runs to 495 residues: Taxoid 2-alpha-hydroxylase (495 aa).

Residues 17–37 form a helical membrane-spanning segment; that stretch reads LQSSAILLTVVSGIIVIVILL. C441 contacts heme.

The protein belongs to the cytochrome P450 family.

The protein resides in the microsome membrane. The enzyme catalyses taxusin + reduced [NADPH--hemoprotein reductase] + O2 = 2alpha-hydroxytaxusin + oxidized [NADPH--hemoprotein reductase] + H2O + H(+). It carries out the reaction 7beta-hydroxytaxusin + reduced [NADPH--hemoprotein reductase] + O2 = 2alpha,7beta-dihydroxytaxusin + oxidized [NADPH--hemoprotein reductase] + H2O + H(+). It participates in alkaloid biosynthesis; taxol biosynthesis. Functionally, catalyzes the conversion of taxusin to 2-alpha-hydroxytaxusin in taxol biosynthesis. Catalyzes the conversion of 7-beta-hydroxytaxusin to 2-alpha-7-beta-hydroxytaxusin in taxol biosynthesis. In Taxus canadensis (Canadian yew), this protein is Taxoid 2-alpha-hydroxylase.